Reading from the N-terminus, the 329-residue chain is Ig gamma-2C chain C region (329 aa).

Positions 1–97 (ARTTAPSVYP…ATKSNLIKRI (97 aa)) are CH1. The cysteines at positions 27 and 82 are disulfide-linked. Positions 98-113 (EPRRPKPRPPTDICSC) are hinge. Residues 114–222 (DDNLGRPSVF…PIEKTISKPR (109 aa)) are CH2. Disulfide bonds link Cys143–Cys203 and Cys249–Cys307. The segment at 223–329 (GKARTPQVYT…QKNLSRSPGK (107 aa)) is CH3.

This is Ig gamma-2C chain C region from Rattus norvegicus (Rat).